The chain runs to 396 residues: tRNA-specific 2-thiouridylase MnmA (396 aa).

Residues 35–42 and L61 contribute to the ATP site; that span reads GLSGGVDS. C122 acts as the Nucleophile in catalysis. C122 and C221 are oxidised to a cystine. G147 lines the ATP pocket. The tract at residues 171-173 is interaction with tRNA; it reads KDQ. Residue C221 is the Cysteine persulfide intermediate of the active site. An interaction with tRNA region spans residues 326 to 327; sequence RY.

The protein belongs to the MnmA/TRMU family.

The protein resides in the cytoplasm. The catalysed reaction is S-sulfanyl-L-cysteinyl-[protein] + uridine(34) in tRNA + AH2 + ATP = 2-thiouridine(34) in tRNA + L-cysteinyl-[protein] + A + AMP + diphosphate + H(+). Functionally, catalyzes the 2-thiolation of uridine at the wobble position (U34) of tRNA, leading to the formation of s(2)U34. This chain is tRNA-specific 2-thiouridylase MnmA, found in Parasynechococcus marenigrum (strain WH8102).